Here is a 409-residue protein sequence, read N- to C-terminus: ATPase ASNA1 homolog (409 aa).

Residue 21 to 28 coordinates ATP; sequence KGGVGKTT. D62 is a catalytic residue. ATP contacts are provided by E303 and N330. Zn(2+) is bound by residues C342 and C345.

It belongs to the arsA ATPase family. Homodimer.

It localises to the cytoplasm. It is found in the endoplasmic reticulum. ATPase required for the post-translational delivery of tail-anchored (TA) proteins to the endoplasmic reticulum. Recognizes and selectively binds the transmembrane domain of TA proteins in the cytosol. This complex then targets to the endoplasmic reticulum by membrane-bound receptors, where the tail-anchored protein is released for insertion. This process is regulated by ATP binding and hydrolysis. ATP binding drives the homodimer towards the closed dimer state, facilitating recognition of newly synthesized TA membrane proteins. ATP hydrolysis is required for insertion. Subsequently, the homodimer reverts towards the open dimer state, lowering its affinity for the membrane-bound receptor, and returning it to the cytosol to initiate a new round of targeting. This chain is ATPase ASNA1 homolog, found in Leishmania infantum.